Consider the following 275-residue polypeptide: Arylalkylamine N-acetyltransferase 1 (275 aa).

Residues 181-183 (LSV) and 189-193 (GLGIA) each bind acetyl-CoA. The N-acetyltransferase domain occupies 181–254 (LSVDTNYRGL…GEVVFKPAAP (74 aa)).

Belongs to the acetyltransferase family. AANAT subfamily. In terms of tissue distribution, in the adult, expressed in the midgut portion of the thoracic segments and the frontal half of the abdomen (at protein level). Expressed in the epithelial cell layer facing the lumen of the gut (at protein level). In the brain, expressed in a sub-populations of neurons and astrocytes, and in a set of distinct stripes in the optic lobes (at protein level). Expressed mainly in serotonergic neurons but also in subsets of glutamatergic, GABAergic and cholinergic neurons (at protein level).

The protein localises to the cytoplasm. Its subcellular location is the nucleus. It catalyses the reaction a 2-arylethylamine + acetyl-CoA = an N-acetyl-2-arylethylamine + CoA + H(+). It carries out the reaction serotonin + acetyl-CoA = N-acetylserotonin + CoA + H(+). The catalysed reaction is dopamine + acetyl-CoA = N-acetyldopamine + CoA + H(+). The enzyme catalyses tyramine + acetyl-CoA = N-acetyltyramine + CoA + H(+). It catalyses the reaction octopamine + acetyl-CoA = N-acetyloctopamine + CoA + H(+). It carries out the reaction 5-methoxytryptamine + acetyl-CoA = melatonin + CoA + H(+). The catalysed reaction is 2-phenylethylamine + acetyl-CoA = N-(2-phenylethyl)acetamide + CoA + H(+). The enzyme catalyses noradrenaline + acetyl-CoA = N-acetylnoradrenaline + CoA + H(+). It catalyses the reaction tyramine + butanoyl-CoA = N-butanoyltyramine + CoA + H(+). It carries out the reaction tyramine + hexanoyl-CoA = N-hexanoyltyramine + CoA + H(+). The catalysed reaction is tryptamine + acetyl-CoA = N-acetyltryptamine + CoA + H(+). The enzyme catalyses dopamine + hexadecanoyl-CoA = N-hexadecanoyl-dopamine + CoA + H(+). It catalyses the reaction dopamine + (9Z)-octadecenoyl-CoA = N-(9Z-octadecanoyl)-dopamine + CoA + H(+). It carries out the reaction serotonin + hexadecanoyl-CoA = N-hexadecanoyl-serotonin + CoA + H(+). The catalysed reaction is serotonin + (9Z)-octadecenoyl-CoA = N-(9Z-octadecenoyl)-serotonin + CoA + H(+). The enzyme catalyses serotonin + octadecanoyl-CoA = N-octadecanoyl-serotonin + CoA + H(+). It catalyses the reaction serotonin + (5Z,8Z,11Z,14Z)-eicosatetraenoyl-CoA = N-[(5Z,8Z,11Z,14Z)-eicosatetraenoyl]-serotonin + CoA + H(+). The protein operates within aromatic compound metabolism; melatonin biosynthesis; melatonin from serotonin: step 1/2. Inhibited by long-chain acyl-CoA thioesters, oleoyl-CoA (an analog of acetyl-CoA) and tyrosol (an analog of tyramine). Functionally, catalyzes N-acetylation of tryptamine, tyramine, dopamine, serotonin and octopamine. In astrocytes, regulates sleep homeostasis by limiting the accumulation of serotonin and dopamine in the brain upon sleep deprivation. Is not essential for sclerotization. This Drosophila melanogaster (Fruit fly) protein is Arylalkylamine N-acetyltransferase 1.